A 161-amino-acid polypeptide reads, in one-letter code: Phosphopantetheine adenylyltransferase (161 aa).

Ser-9 serves as a coordination point for substrate. ATP contacts are provided by residues 9–10 (SF) and His-17. Lys-41, Val-73, and Lys-87 together coordinate substrate. ATP contacts are provided by residues 88–90 (GLR), Glu-98, and 122–128 (YSFVSSS).

Belongs to the bacterial CoaD family. In terms of assembly, homohexamer. It depends on Mg(2+) as a cofactor.

The protein localises to the cytoplasm. The catalysed reaction is (R)-4'-phosphopantetheine + ATP + H(+) = 3'-dephospho-CoA + diphosphate. Its pathway is cofactor biosynthesis; coenzyme A biosynthesis; CoA from (R)-pantothenate: step 4/5. Functionally, reversibly transfers an adenylyl group from ATP to 4'-phosphopantetheine, yielding dephospho-CoA (dPCoA) and pyrophosphate. This chain is Phosphopantetheine adenylyltransferase, found in Mycobacterium bovis (strain ATCC BAA-935 / AF2122/97).